The primary structure comprises 517 residues: DNA-binding protein Ikaros (517 aa).

The tract at residues 1 to 71 is disordered; that stretch reads MDVDEGQDMS…QSDEENGRAC (71 aa). At S13 the chain carries Phosphoserine. Phosphothreonine is present on T23. Residues 37–47 show a composition bias toward polar residues; that stretch reads LSTTSGAQQNS. K58 participates in a covalent cross-link: Glycyl lysine isopeptide (Lys-Gly) (interchain with G-Cter in SUMO). Phosphoserine occurs at positions 63 and 101. Residues 117 to 139 form a C2H2-type 1 zinc finger; that stretch reads LKCDICGIVCIGPNVLMVHKRSH. T140 is subject to Phosphothreonine. The C2H2-type 2 zinc finger occupies 144-166; the sequence is FQCNQCGASFTQKGNLLRHIKLH. The interval 153–162 is required for both high-affinity DNA binding and pericentromeric heterochromatin localization; it reads FTQKGNLLRH. At S167 the chain carries Phosphoserine. The C2H2-type 3 zinc-finger motif lies at 172 to 194; it reads FKCHLCNYACRRRDALTGHLRTH. The segment at 179 to 194 is required for both high-affinity DNA binding and pericentromeric heterochromatin localization; sequence YACRRRDALTGHLRTH. S195 is subject to Phosphoserine. The C2H2-type 4 zinc-finger motif lies at 200-223; it reads HKCGYCGRSYKQRSSLEEHKERCH. K239 is covalently cross-linked (Glycyl lysine isopeptide (Lys-Gly) (interchain with G-Cter in SUMO)). A phosphoserine mark is found at S259, S287, S293, S357, S360, S384, S386, S388, and S392. Residues 376-400 form a disordered region; the sequence is SVSSEREASPSNSCQDSTDTESNAE. At T393 the chain carries Phosphothreonine. Residues S397 and S440 each carry the phosphoserine modification. 2 consecutive C2H2-type zinc fingers follow at residues 457-479 and 488-512; these read YKCEHCRVLFLDHVMYTIHMGCH and FECNMCGYHSQDRYEFSSHITRGEH. Residues 463–466 form a required for binding PP1CC region; the sequence is RVLF.

This sequence belongs to the Ikaros C2H2-type zinc-finger protein family. As to quaternary structure, heterodimer with other IKAROS family members. Interacts with IKZF4 and IKZF5. Component of the chromatin-remodeling NuRD repressor complex which includes at least HDAC1, HDAC2, RBBP4, RBBP7, IKZF1, MTA2, MBD2, MBD3, MTA1L1, CHD3 and CHD4. Interacts directly with the CHD4 component of the NuRD complex. Interacts directly with SMARCA4; the interaction associates IKFZ1 with the BAF complex. Interacts with SUMO1; the interaction sumoylates IKAROS, promoted by PIAS2 and PIAS3. Interacts with PIAS2 (isoform alpha); the interaction promotes sumoylation and reduces transcription repression. Interacts, to a lesser extent, with PIAS3. Interacts with PPP1CC; the interaction targets PPP1CC to pericentromeric heterochromatin, dephosphorylates IKAROS, stabilizes it and prevents it from degradation. Interacts with IKZF3. Phosphorylation at Ser-357 and Ser-360 downstream of SYK induces nuclear translocation. Phosphorylation controls cell-cycle progression from late G(1) stage to S stage. Hyperphosphorylated during G2/M phase. Dephosphorylated state during late G(1) phase. Phosphorylation on Thr-140 is required for DNA and pericentromeric location during mitosis. CK2 is the main kinase, in vitro. GSK3 and CDK may also contribute to phosphorylation of the C-terminal serine and threonine residues. Phosphorylation on these C-terminal residues reduces the DNA-binding ability. Phosphorylation/dephosphorylation events on Ser-13 and Ser-293 regulate TDT expression during thymocyte differentiation. Dephosphorylation by protein phosphatase 1 regulates stability and pericentromeric heterochromatin location. Phosphorylated in both lymphoid and non-lymphoid tissues. Post-translationally, sumoylated. Simultaneous sumoylation on the 2 sites results in a loss of both HDAC-dependent and HDAC-independent repression. Has no effect on pericentromeric heterochromatin location. Desumoylated by SENP1. In terms of processing, polyubiquitinated. As to expression, strongly expressed in T-cells and their progenitors,in B-cells, and in all early embryonic retinal progenitor cells (RPCs). Isoforms V and VI are the predominant isoforms in lymphocytes.

It localises to the nucleus. The protein resides in the cytoplasm. Its function is as follows. Transcription regulator of hematopoietic cell differentiation. Binds gamma-satellite DNA. Binds with higher affinity to gamma satellite A. Plays a role in the development of lymphocytes, B- and T-cells. Binds and activates the enhancer (delta-A element) of the CD3-delta gene. Repressor of the TDT (terminal deoxynucleotidyltransferase) gene during thymocyte differentiation. Regulates transcription through association with both HDAC-dependent and HDAC-independent complexes. Targets the 2 chromatin-remodeling complexes, NuRD and BAF (SWI/SNF), in a single complex (PYR complex), to the beta-globin locus in adult erythrocytes. Increases normal apoptosis in adult erythroid cells. Confers early temporal competence to retinal progenitor cells (RPCs). Function is isoform-specific and is modulated by dominant-negative inactive isoforms. The chain is DNA-binding protein Ikaros (Ikzf1) from Mus musculus (Mouse).